The primary structure comprises 103 residues: Small ribosomal subunit protein uS10 (103 aa).

This sequence belongs to the universal ribosomal protein uS10 family. Part of the 30S ribosomal subunit.

Involved in the binding of tRNA to the ribosomes. This is Small ribosomal subunit protein uS10 from Psychrobacter arcticus (strain DSM 17307 / VKM B-2377 / 273-4).